We begin with the raw amino-acid sequence, 99 residues long: Co-chaperonin GroES (99 aa).

It belongs to the GroES chaperonin family. As to quaternary structure, heptamer of 7 subunits arranged in a ring. Interacts with the chaperonin GroEL.

It is found in the cytoplasm. In terms of biological role, together with the chaperonin GroEL, plays an essential role in assisting protein folding. The GroEL-GroES system forms a nano-cage that allows encapsulation of the non-native substrate proteins and provides a physical environment optimized to promote and accelerate protein folding. GroES binds to the apical surface of the GroEL ring, thereby capping the opening of the GroEL channel. The polypeptide is Co-chaperonin GroES (Rhodococcus erythropolis (strain PR4 / NBRC 100887)).